The sequence spans 650 residues: Sodium-dependent phosphate transporter 2 (650 aa).

At 1–5 (MAMDG) the chain is on the extracellular side. A helical transmembrane segment spans residues 6 to 26 (YLWMVILGFIIAFILAFSVGA). Topologically, residues 27–46 (NDVANSFGTAVGSGVVTLRQ) are cytoplasmic. The chain crosses the membrane as a helical span at residues 47–67 (ACILASIFETTGSVLLGAKVG). The Extracellular segment spans residues 68 to 83 (ETIRKGIIDVNLYNDT). A glycan (N-linked (GlcNAc...) asparagine) is linked at asparagine 81. A helical membrane pass occupies residues 84-104 (VVTLMAGEVSAMVGSAVWQLI). The Cytoplasmic segment spans residues 105 to 109 (ASFLR). Residues 110 to 130 (LPISGTHCIVGSTIGFSLVAN) form a helical membrane-spanning segment. The Extracellular segment spans residues 131–142 (GTKGVQWMELVK). Residues 143-163 (IVASWFISPLLSGFMSGVLFV) traverse the membrane as a helical segment. Residues 164–192 (LIRMFILTKEDPVPNGLQALPLFYAATIA) are Cytoplasmic-facing. Residues 193–212 (INVFSIMYTGAPVLGLSLPI) form a helical membrane-spanning segment. Tryptophan 213 is a topological domain (extracellular). Residues 214-234 (AIALISFGVALLFAFFVWLFV) traverse the membrane as a helical segment. At 235–482 (CPWMRRKIAG…EEKEEKDTAE (248 aa)) the chain is on the cytoplasmic side. Phosphoserine occurs at positions 253, 256, 259, 268, 315, and 384. The segment at 268–310 (SPFKELPGAKASDDSAVPLTNPTGEAVGPSEGTSTGNHPRTAY) is disordered. A helical transmembrane segment spans residues 483–503 (VHLLFHFLQVLTACFGSFAHG). Residues 504–530 (GNDVSNAIGPLVALWLIYEQGGVMQEA) lie on the Extracellular side of the membrane. A helical membrane pass occupies residues 531-551 (ATPVWLLFYGGVGICTGLWVW). Topologically, residues 552–571 (GRRVIQTMGKDLTPITPSSG) are cytoplasmic. A helical transmembrane segment spans residues 572 to 586 (FTIELASAFTVVIAS). Residues 587-593 (NIGLPVS) are Extracellular-facing. Residues 594 to 609 (TTHCKVGSVVAVGWIR) traverse the membrane as a helical segment. Topologically, residues 610-621 (SRKAVDWHLFRN) are cytoplasmic. The chain crosses the membrane as a helical span at residues 622 to 642 (IFVAWFVTVPVAGLFSAAIMA). The Extracellular portion of the chain corresponds to 643 to 650 (IFMYGILS).

It belongs to the inorganic phosphate transporter (PiT) (TC 2.A.20) family. In terms of assembly, homodimer.

It localises to the cell membrane. The protein resides in the apical cell membrane. The enzyme catalyses 2 Na(+)(out) + phosphate(out) = 2 Na(+)(in) + phosphate(in). Sodium-phosphate symporter which preferentially transports the monovalent form of phosphate with a stoichiometry of two sodium ions per phosphate ion. Plays a critical role in the determination of bone quality and strength by providing phosphate for bone mineralization. Required to maintain normal cerebrospinal fluid phosphate levels. Mediates phosphate-induced calcification of vascular smooth muscle cells (VCMCs) and can functionally compensate for loss of SLC20A1 in VCMCs. Functionally, (Microbial infection) Functions as a retroviral receptor and confers hamster cells susceptibility to infection to Gibbon Ape Leukemia Virus (GaLV) and amphotropic murine leukemia virus (A-MuLV). In Cricetulus griseus (Chinese hamster), this protein is Sodium-dependent phosphate transporter 2 (SLC20A2).